The primary structure comprises 221 residues: Molybdenum cofactor guanylyltransferase (221 aa).

GTP contacts are provided by residues 18 to 20, Lys35, Asn63, Asp81, and Asp112; that span reads IAG. Mg(2+) is bound at residue Asp112.

Belongs to the MobA family. Monomer. Mg(2+) serves as cofactor.

The protein resides in the cytoplasm. The enzyme catalyses Mo-molybdopterin + GTP + H(+) = Mo-molybdopterin guanine dinucleotide + diphosphate. Functionally, transfers a GMP moiety from GTP to Mo-molybdopterin (Mo-MPT) cofactor (Moco or molybdenum cofactor) to form Mo-molybdopterin guanine dinucleotide (Mo-MGD) cofactor. The chain is Molybdenum cofactor guanylyltransferase from Brucella melitensis biotype 2 (strain ATCC 23457).